The primary structure comprises 466 residues: MDQKLLTDFRSELLDSRFGAKAISTIAESKRFPLHEMRDDVAFQIINDELYLDGNARQNLATFCQTWDDENVHKLMDLSINKNWIDKEEYPQSAAIDLRCVNMVADLWHAPAPKNGQAVGTNTIGSSEACMLGGMAMKWRWRKRMEAAGKPTDKPNLVCGPVQICWHKFARYWDVELREIPMRPGQLFMDPKRMIEACDENTIGVVPTFGVTYTGNYEFPQPLHDALDKFQADTGIDIDMHIDAASGGFLAPFVAPDIVWDFRLPRVKSISASGHKFGLAPLGCGWVIWRDEEALPQELVFNVDYLGGQIGTFAINFSRPAGQVIAQYYEFLRLGREGYTKVQNASYQVAAYLADEIAKLGPYEFICTGRPDEGIPAVCFKLKDGEDPGYTLYDLSERLRLRGWQVPAFTLGGEATDIVVMRIMCRRGFEMDFAELLLEDYKASLKYLSDHPKLQGIAQQNSFKHT.

Residues T62 and N83 each coordinate substrate. Residues 126 to 127 (SS), T212, and H275 each bind pyridoxal 5'-phosphate. N6-(pyridoxal phosphate)lysine is present on K276.

Belongs to the group II decarboxylase family. In terms of assembly, homohexamer. It depends on pyridoxal 5'-phosphate as a cofactor.

The enzyme catalyses L-glutamate + H(+) = 4-aminobutanoate + CO2. Functionally, converts glutamate to gamma-aminobutyrate (GABA), consuming one intracellular proton in the reaction. The gad system helps to maintain a near-neutral intracellular pH when cells are exposed to extremely acidic conditions. The ability to survive transit through the acidic conditions of the stomach is essential for successful colonization of the mammalian host by commensal and pathogenic bacteria. This is Glutamate decarboxylase alpha (gadA) from Escherichia coli O6:H1 (strain CFT073 / ATCC 700928 / UPEC).